The following is a 348-amino-acid chain: Anthranilate phosphoribosyltransferase (348 aa).

5-phospho-alpha-D-ribose 1-diphosphate is bound by residues Gly-87, 90-91 (GD), Thr-95, 97-100 (NIST), 115-123 (KHGNRSASG), and Ser-127. Gly-87 serves as a coordination point for anthranilate. A Mg(2+)-binding site is contributed by Ser-99. Asn-118 provides a ligand contact to anthranilate. Residue Arg-173 participates in anthranilate binding. Asp-232 and Glu-233 together coordinate Mg(2+).

This sequence belongs to the anthranilate phosphoribosyltransferase family. In terms of assembly, homodimer. Requires Mg(2+) as cofactor.

The catalysed reaction is N-(5-phospho-beta-D-ribosyl)anthranilate + diphosphate = 5-phospho-alpha-D-ribose 1-diphosphate + anthranilate. Its pathway is amino-acid biosynthesis; L-tryptophan biosynthesis; L-tryptophan from chorismate: step 2/5. Its function is as follows. Catalyzes the transfer of the phosphoribosyl group of 5-phosphorylribose-1-pyrophosphate (PRPP) to anthranilate to yield N-(5'-phosphoribosyl)-anthranilate (PRA). This Synechococcus sp. (strain WH7803) protein is Anthranilate phosphoribosyltransferase.